A 217-amino-acid chain; its full sequence is uncharacterized protein (217 aa).

This is an uncharacterized protein from Methanothermobacter thermautotrophicus (Methanobacterium thermoformicicum).